A 77-amino-acid polypeptide reads, in one-letter code: U9-lycotoxin-Ls1a (77 aa).

Positions 1–20 (MKLLLFTALVLVVIVSLIEA) are cleaved as a signal peptide. Residues 21-26 (EAENER) constitute a propeptide that is removed on maturation.

This sequence belongs to the neurotoxin 19 (CSTX) family. 08 (U8-Lctx) subfamily. Post-translationally, contains 4 disulfide bonds. In terms of tissue distribution, expressed by the venom gland.

The protein resides in the secreted. This chain is U9-lycotoxin-Ls1a, found in Lycosa singoriensis (Wolf spider).